The chain runs to 291 residues: Phosphate import ATP-binding protein PstB (291 aa).

Residues 45–286 enclose the ABC transporter domain; it reads YSTQNLDLWY…PADKQTEDYI (242 aa). 77–84 lines the ATP pocket; sequence GPSGCGKS.

This sequence belongs to the ABC transporter superfamily. Phosphate importer (TC 3.A.1.7) family. The complex is composed of two ATP-binding proteins (PstB), two transmembrane proteins (PstC and PstA) and a solute-binding protein (PstS).

Its subcellular location is the cell membrane. The catalysed reaction is phosphate(out) + ATP + H2O = ADP + 2 phosphate(in) + H(+). Its function is as follows. Part of the ABC transporter complex PstSACB involved in phosphate import. Responsible for energy coupling to the transport system. The chain is Phosphate import ATP-binding protein PstB from Staphylococcus epidermidis (strain ATCC 12228 / FDA PCI 1200).